The following is a 407-amino-acid chain: Chorismate synthase (407 aa).

Arg-43 and Arg-49 together coordinate NADP(+). FMN contacts are provided by residues 143 to 145 (RSS), 264 to 265 (QA), Gly-308, 323 to 327 (KPIST), and Arg-349.

This sequence belongs to the chorismate synthase family. As to quaternary structure, homotetramer. Requires FMNH2 as cofactor.

It catalyses the reaction 5-O-(1-carboxyvinyl)-3-phosphoshikimate = chorismate + phosphate. It functions in the pathway metabolic intermediate biosynthesis; chorismate biosynthesis; chorismate from D-erythrose 4-phosphate and phosphoenolpyruvate: step 7/7. Functionally, catalyzes the anti-1,4-elimination of the C-3 phosphate and the C-6 proR hydrogen from 5-enolpyruvylshikimate-3-phosphate (EPSP) to yield chorismate, which is the branch point compound that serves as the starting substrate for the three terminal pathways of aromatic amino acid biosynthesis. This reaction introduces a second double bond into the aromatic ring system. This chain is Chorismate synthase, found in Corynebacterium efficiens (strain DSM 44549 / YS-314 / AJ 12310 / JCM 11189 / NBRC 100395).